The sequence spans 216 residues: Probable GTP-binding protein EngB (216 aa).

Residues 43 to 216 (DRLEVCFAGR…TLRSIITDLT (174 aa)) form the EngB-type G domain. GTP contacts are provided by residues 51-58 (GRSNVGKS), 78-82 (GRTQE), 96-99 (DLPG), 163-166 (TKAD), and 197-199 (TSS). The Mg(2+) site is built by Ser58 and Thr80.

It belongs to the TRAFAC class TrmE-Era-EngA-EngB-Septin-like GTPase superfamily. EngB GTPase family. The cofactor is Mg(2+).

Its function is as follows. Necessary for normal cell division and for the maintenance of normal septation. The chain is Probable GTP-binding protein EngB from Roseobacter denitrificans (strain ATCC 33942 / OCh 114) (Erythrobacter sp. (strain OCh 114)).